Reading from the N-terminus, the 150-residue chain is Group IIC secretory phospholipase A2 (150 aa).

A signal peptide spans 1-20 (MKGIAVFLVFIFCWTTSTLS). Intrachain disulfides connect Cys-46–Cys-143, Cys-48–Cys-64, Cys-63–Cys-121, Cys-69–Cys-150, Cys-70–Cys-114, Cys-79–Cys-107, Cys-97–Cys-112, and Cys-99–Cys-105. 3 residues coordinate Ca(2+): Tyr-47, Gly-49, and Gly-51. His-67 is an active-site residue. Residue Asp-68 participates in Ca(2+) binding. The N-linked (GlcNAc...) asparagine glycan is linked to Asn-92. The active site involves Asp-115.

The protein belongs to the phospholipase A2 family. It depends on Ca(2+) as a cofactor.

It localises to the secreted. The catalysed reaction is a 1,2-diacyl-sn-glycero-3-phosphocholine + H2O = a 1-acyl-sn-glycero-3-phosphocholine + a fatty acid + H(+). In terms of biological role, PA2 catalyzes the calcium-dependent hydrolysis of the 2-acyl groups in 3-sn-phosphoglycerides. This chain is Group IIC secretory phospholipase A2 (Pla2g2c), found in Rattus norvegicus (Rat).